Consider the following 434-residue polypeptide: Adenylosuccinate synthetase (434 aa).

Residues 22-28 (GDEGKGK) and 50-52 (GHT) contribute to the GTP site. Asp-23 acts as the Proton acceptor in catalysis. The Mg(2+) site is built by Asp-23 and Gly-50. IMP is bound by residues 23 to 26 (DEGK), 48 to 51 (NAGH), Thr-139, Arg-153, Gln-234, Thr-249, and Arg-313. His-51 functions as the Proton donor in the catalytic mechanism. 309 to 315 (ATTGRKR) contributes to the substrate binding site. Residues Arg-315, 341-343 (KLD), and 423-425 (SVG) each bind GTP.

The protein belongs to the adenylosuccinate synthetase family. In terms of assembly, homodimer. It depends on Mg(2+) as a cofactor.

Its subcellular location is the cytoplasm. It catalyses the reaction IMP + L-aspartate + GTP = N(6)-(1,2-dicarboxyethyl)-AMP + GDP + phosphate + 2 H(+). It functions in the pathway purine metabolism; AMP biosynthesis via de novo pathway; AMP from IMP: step 1/2. Functionally, plays an important role in the de novo pathway of purine nucleotide biosynthesis. Catalyzes the first committed step in the biosynthesis of AMP from IMP. This chain is Adenylosuccinate synthetase, found in Chlorobium chlorochromatii (strain CaD3).